Consider the following 423-residue polypeptide: Mannitol-1-phosphate 5-dehydrogenase (423 aa).

Zn(2+)-binding residues include Cys40, His69, and Glu70.

This sequence belongs to the zinc-containing alcohol dehydrogenase family. The cofactor is Zn(2+).

It catalyses the reaction D-mannitol 1-phosphate + NAD(+) = beta-D-fructose 6-phosphate + NADH + H(+). Seems to be involved in mannitol utilization. Complements an E.coli mtlD deletion mutant. The polypeptide is Mannitol-1-phosphate 5-dehydrogenase (Aliivibrio fischeri (strain ATCC 700601 / ES114) (Vibrio fischeri)).